We begin with the raw amino-acid sequence, 207 residues long: MTEAASEGTESFAFGAVVERRDELDGRPWISYPVRVVADTPELVAVHLSHGTRLTFGDDPFSWGPHPWQLFGDRWQSAGILQLHRPGRGHSVWVLRDADTGAFREWYVNVEAPWRRTPTGFSTLDHEIDLVVPADSRTLRWKDVEKFEERARIGHFSPEEATAIRAEAADVAREIAAGEQWWDTRWSRWEPPAGWNALLQSFETEGS.

Residues W68, R74, Q76, and S77 each coordinate CDP. A divalent metal cation contacts are provided by N109, D125, E127, and D129. K142 is a binding site for CDP. The Proton donor role is filled by K142. D143 contacts a divalent metal cation.

Belongs to the FomD family. Mn(2+) is required as a cofactor. Requires Co(2+) as cofactor.

The catalysed reaction is cytidine 5'-({hydroxy[(S)-2-hydroxypropyl]phosphonoyl}phosphate) + H2O = (S)-2-hydroxypropylphosphonate + CMP + H(+). It functions in the pathway antibiotic biosynthesis; fosfomycin biosynthesis. Hydrolysis of (S)-HPP-CMP is inhibited by CDP. Involved in fosfomycin biosynthesis. Catalyzes the hydrolysis of cytidylyl (S)-2-hydroxypropylphosphonate ((S)-HPP-CMP) to give (S)-2-hydroxypropylphosphonate ((S)-HPP) and CMP. Can also hydrolyze (R)-HPP-CMP and cytidylyl 2-hydroxyethylphosphonate (HEP-CMP), which is a biosynthetic intermediate before C-methylation, but the catalytic efficiency is much higher with (S)-HPP-CMP. The sequence is that of Cytidylyl-2-hydroxypropylphosphonate hydrolase from Streptomyces fradiae (Streptomyces roseoflavus).